Consider the following 21-residue polypeptide: Peptide PGLa-B2 (21 aa).

A Leucine amide modification is found at leucine 21.

Expressed by the skin glands.

Its subcellular location is the secreted. Has antimicrobial activity against Gram-negative bacterium E.coli ATCC 25922 (MIC=25 uM), Gram-positive bacterium S.auerus ATCC 25923 (MIC=50 uM) and against fungus C.albicans ATCC 90028 (MIC=25 uM). Has some hemolytic activity against human erythrocytes at high concentration. The polypeptide is Peptide PGLa-B2 (Xenopus borealis (Kenyan clawed frog)).